Reading from the N-terminus, the 1180-residue chain is Chitin synthase 6 (1180 aa).

Helical transmembrane passes span 108–128 and 374–394; these read FTIC…IIAF and LLLA…IAAL. N-linked (GlcNAc...) asparagine glycosylation occurs at asparagine 737. The next 3 membrane-spanning stretches (helical) occupy residues 762–782, 795–815, and 822–842; these read FIVF…VYLV, IPYI…ILFL, and YIGW…FLPI. The 58-residue stretch at 1118–1175 folds into the DEK-C domain; that stretch reads DPTDEEIKSAVQTYLANQPSLMNVTKRSVREALVAAFPNAELSYKKSMINKAIDDTLS.

It belongs to the chitin synthase family. Class V subfamily.

Its subcellular location is the cell membrane. It localises to the cytoplasmic vesicle membrane. The enzyme catalyses [(1-&gt;4)-N-acetyl-beta-D-glucosaminyl](n) + UDP-N-acetyl-alpha-D-glucosamine = [(1-&gt;4)-N-acetyl-beta-D-glucosaminyl](n+1) + UDP + H(+). Polymerizes chitin, a structural polymer of the cell wall and septum, by transferring the sugar moiety of UDP-GlcNAc to the non-reducing end of the growing chitin polymer. Plays a crucial role during infection and allows the fungus to overcome the resistance of the plant that checks growth of the pathogen and eventually eliminates it. This is Chitin synthase 6 from Mycosarcoma maydis (Corn smut fungus).